The primary structure comprises 795 residues: Protocadherin beta-12 (795 aa).

The signal sequence occupies residues 1–26 (MENGGAGTLQIRQVLLFFVLLGMSQA). Residues 27 to 690 (GSETGNFLVM…AQADSLTVYL (664 aa)) are Extracellular-facing. 5 Cadherin domains span residues 35-133 (VMEE…SPVF), 138-242 (MLLE…SPEF), 247-347 (YEVK…APEI), 352-451 (ITSP…APAF), and 456-561 (YALF…SPFV). 4 N-linked (GlcNAc...) asparagine glycosylation sites follow: Asn-418, Asn-436, Asn-487, and Asn-567. Residues 568 to 671 (GSAPCTELVP…LVDGFSQPYL (104 aa)) form the Cadherin 6 domain. A helical transmembrane segment spans residues 691-711 (VVALASVSSLFLFSVLLFVAV). The Cytoplasmic portion of the chain corresponds to 712–795 (RLCRRSRAAP…NPPFQNNLGF (84 aa)).

Its subcellular location is the cell membrane. Potential calcium-dependent cell-adhesion protein. May be involved in the establishment and maintenance of specific neuronal connections in the brain. The chain is Protocadherin beta-12 (PCDHB12) from Homo sapiens (Human).